The sequence spans 395 residues: F-box/kelch-repeat protein At3g13680 (395 aa).

Residues 1–47 (MTTMGDLPGDLVEEILSRVPLTSLRAIRSTCQKWNSLSKSQICGRKA) form the F-box domain. Kelch repeat units lie at residues 154–202 (ILRI…SLKG), 210–256 (KKET…VSLA), 265–314 (VLYQ…FIDE), and 337–383 (IVYI…LVQL).

The polypeptide is F-box/kelch-repeat protein At3g13680 (Arabidopsis thaliana (Mouse-ear cress)).